A 231-amino-acid chain; its full sequence is Aminodeoxyfutalosine nucleosidase (231 aa).

Glu14 acts as the Proton acceptor in catalysis. Substrate is bound by residues Gly81, Val155, and 175–176; that span reads ME. The active-site Proton donor is Asp199.

Belongs to the PNP/UDP phosphorylase family. As to quaternary structure, homodimer.

It carries out the reaction 6-amino-6-deoxyfutalosine + H2O = dehypoxanthine futalosine + adenine. It catalyses the reaction S-adenosyl-L-homocysteine + H2O = S-(5-deoxy-D-ribos-5-yl)-L-homocysteine + adenine. The enzyme catalyses S-methyl-5'-thioadenosine + H2O = 5-(methylsulfanyl)-D-ribose + adenine. The catalysed reaction is 5'-deoxyadenosine + H2O = 5-deoxy-D-ribose + adenine. It functions in the pathway quinol/quinone metabolism; menaquinone biosynthesis. It participates in amino-acid biosynthesis; L-methionine biosynthesis via salvage pathway; S-methyl-5-thio-alpha-D-ribose 1-phosphate from S-methyl-5'-thioadenosine (hydrolase route): step 1/2. Its function is as follows. Catalyzes the direct conversion of aminodeoxyfutalosine (AFL) into dehypoxanthine futalosine (DHFL) and adenine via the hydrolysis of the N-glycosidic bond; this reaction seems to represent an essential step in the menaquinone biosynthesis pathway in Helicobacter species. Can also probably catalyzes the hydrolysis of 5'-methylthioadenosine (MTA) and S-adenosylhomocysteine (SAH) to adenine and the corresponding thioribose, 5'-methylthioribose and S-ribosylhomocysteine, respectively. These other activities highlight the tremendous versatility of the enzyme, which also plays key roles in S-adenosylmethionine recycling and in the biosynthesis of the quorum-sensing molecule autoinducer-2. Does not act on futalosine (FL) as substrate. The protein is Aminodeoxyfutalosine nucleosidase (mtnN) of Helicobacter pylori (strain ATCC 700392 / 26695) (Campylobacter pylori).